The following is a 337-amino-acid chain: Histidine N-acetyltransferase (337 aa).

A propeptide spans 1 to 2 (MK) (removed in mature form). In terms of domain architecture, N-acetyltransferase spans 21-156 (LQFAVATEED…QGILLVRFRA (136 aa)).

The catalysed reaction is L-histidine + acetyl-CoA = N(alpha)-acetyl-L-histidine + CoA + H(+). In terms of biological role, enzyme responsible for the N-acetyl-histidine (NAH) synthesis, which is a major constituent of brain and lens of ectothermic vertebrates. The protein is Histidine N-acetyltransferase (hisat) of Scomber australasicus (Blue mackerel).